The sequence spans 150 residues: Leukotriene C4 synthase (150 aa).

Residues 1–6 (MKDEVA) lie on the Cytoplasmic side of the membrane. A helical transmembrane segment spans residues 7–27 (LLATVTLVGVLLQAYFSLQVI). The Lumenal portion of the chain corresponds to 28–48 (SARRAFHVSPPLTSGPPEFER). Arg-30 contacts glutathione. The active-site Proton donor is Arg-31. The residue at position 36 (Ser-36) is a Phosphoserine. The helical transmembrane segment at 49 to 69 (VFRAQVNCSEYFPLFLATLWV) threads the bilayer. Glutathione-binding positions include 51 to 55 (RAQVN), Gln-53, and 58 to 59 (EY). Over 70–73 (AGIF) the chain is Cytoplasmic. The helical transmembrane segment at 74–94 (FHEGAAALCGLFYLFARLRYF) threads the bilayer. A glutathione-binding site is contributed by 93–97 (YFQGY). Topologically, residues 95–104 (QGYARSAQLR) are lumenal. Residue Arg-104 is the Proton acceptor of the active site. The chain crosses the membrane as a helical span at residues 105–124 (LTPLYASARALWLLVAMAAL). Topologically, residues 125–150 (GLLVHFLPGTLRTALFRWLQMLLPMA) are cytoplasmic.

It belongs to the MAPEG family. As to quaternary structure, homotrimer. Interacts with ALOX5AP and ALOX5. Phosphorylation at Ser-36 by RPS6KB1 inhibits the leukotriene-C4 synthase activity. In terms of tissue distribution, widely expressed.

It localises to the nucleus outer membrane. It is found in the endoplasmic reticulum membrane. The protein resides in the nucleus membrane. It catalyses the reaction leukotriene C4 = leukotriene A4 + glutathione. It carries out the reaction (13S,14S)-epoxy-(4Z,7Z,9E,11E,16Z,19Z)-docosahexaenoate + glutathione = (13R)-S-glutathionyl-(14S)-hydroxy-(4Z,7Z,9E,11E,16Z,19Z)-docosahexaenoate. The protein operates within lipid metabolism; leukotriene C4 biosynthesis. With respect to regulation, inhibited by MK886. Functionally, catalyzes the conjugation of leukotriene A4 with reduced glutathione (GSH) to form leukotriene C4 with high specificity. Can also catalyze the transfer of a glutathionyl group from glutathione (GSH) to 13(S),14(S)-epoxy-docosahexaenoic acid to form maresin conjugate in tissue regeneration 1 (MCTR1), a bioactive lipid mediator that possess potent anti-inflammatory and proresolving actions. This is Leukotriene C4 synthase (Ltc4s) from Mus musculus (Mouse).